Here is a 389-residue protein sequence, read N- to C-terminus: MSEYLFTSESVSEGHPDKVADQVSDAILDAILAQDPKARVAAETLVNTGLCVLAGEITTTAQVDYIKVARETIKRIGYNSSELGFDANGCAVGVYYDQQSPDIAQGVNEGEGIDLNQGAGDQGLMFGYACDETPTLMPFAIYYSHRLMQRQSELRKDGRLPWLRPDAKAQLTVVYDSETGKVKRIDTVVLSTQHDPAISQEELSKAVIEQIIKPVLPPELLTDETKYLINPTGRFVIGGPQGDCGLTGRKIIVDTYGGAAPHGGGAFSGKDPSKVDRSAAYACRYVAKNIVAAGLATQCQIQVSYAIGVAEPTSISIDTFGTGKISEEKLIALVCEHFDLRPKGIVQMLDLLRPIYGKSAAYGHFGREEPEFTWERTDKAASLKAAAGL.

Histidine 15 is an ATP binding site. Aspartate 17 is a Mg(2+) binding site. Residue glutamate 43 participates in K(+) binding. Positions 56 and 99 each coordinate L-methionine. Positions 99–109 (QSPDIAQGVNE) are flexible loop. ATP is bound by residues 166–168 (DAK), 234–235 (RF), aspartate 243, 249–250 (RK), alanine 266, and lysine 270. Aspartate 243 contributes to the L-methionine binding site. Residue lysine 274 participates in L-methionine binding.

This sequence belongs to the AdoMet synthase family. As to quaternary structure, homotetramer; dimer of dimers. Mg(2+) serves as cofactor. K(+) is required as a cofactor.

Its subcellular location is the cytoplasm. It carries out the reaction L-methionine + ATP + H2O = S-adenosyl-L-methionine + phosphate + diphosphate. It participates in amino-acid biosynthesis; S-adenosyl-L-methionine biosynthesis; S-adenosyl-L-methionine from L-methionine: step 1/1. Functionally, catalyzes the formation of S-adenosylmethionine (AdoMet) from methionine and ATP. The overall synthetic reaction is composed of two sequential steps, AdoMet formation and the subsequent tripolyphosphate hydrolysis which occurs prior to release of AdoMet from the enzyme. The polypeptide is S-adenosylmethionine synthase (Neisseria gonorrhoeae (strain ATCC 700825 / FA 1090)).